Consider the following 436-residue polypeptide: Transcriptional regulator dmxR14 (436 aa).

Residues 1-27 (MEEAETNTQVDSVPSNSVRSGAELSSK) show a composition bias toward polar residues. A disordered region spans residues 1 to 32 (MEEAETNTQVDSVPSNSVRSGAELSSKSKLRD). Residues 34–61 (CHACARSKVRCPKQKPSCSRCEARGTTC) constitute a DNA-binding region (zn(2)-C6 fungal-type). The interval 67-136 (RRPGRRRETS…ITTVHNGPEN (70 aa)) is disordered. Positions 90-136 (SHANNRNSPSFSSTRSTLPSPIASDSNSNFTQPQNSSITTVHNGPEN) are enriched in polar residues.

The protein localises to the nucleus. Transcriptional regulator; part of the gene cluster that mediates the biosynthesis of the dimeric xanthones cryptosporioptides. This is Transcriptional regulator dmxR14 from Cryptosporiopsis sp. (strain 8999).